A 431-amino-acid polypeptide reads, in one-letter code: UDP-N-acetylglucosamine 1-carboxyvinyltransferase (431 aa).

A phosphoenolpyruvate-binding site is contributed by 22–23 (KN). Residue Arg-102 coordinates UDP-N-acetyl-alpha-D-glucosamine. The active-site Proton donor is the Cys-126. 2-(S-cysteinyl)pyruvic acid O-phosphothioketal is present on Cys-126. UDP-N-acetyl-alpha-D-glucosamine contacts are provided by Asp-318 and Ile-340.

The protein belongs to the EPSP synthase family. MurA subfamily.

Its subcellular location is the cytoplasm. The catalysed reaction is phosphoenolpyruvate + UDP-N-acetyl-alpha-D-glucosamine = UDP-N-acetyl-3-O-(1-carboxyvinyl)-alpha-D-glucosamine + phosphate. It participates in cell wall biogenesis; peptidoglycan biosynthesis. Functionally, cell wall formation. Adds enolpyruvyl to UDP-N-acetylglucosamine. The chain is UDP-N-acetylglucosamine 1-carboxyvinyltransferase from Bartonella tribocorum (strain CIP 105476 / IBS 506).